Here is a 202-residue protein sequence, read N- to C-terminus: Ras-related protein RABD2c (202 aa).

GTP is bound by residues 15-23 (GDSGVGKSC), 33-40 (YLDSYIST), 63-67 (DTAGQ), 121-124 (NKCD), and 151-153 (SAK). Positions 37-45 (YISTIGVDF) match the Effector region motif. The interval 174–202 (ASQPAGGSKPPTVQIRGQPVNQQSGCCSS) is disordered. Residues 192–202 (PVNQQSGCCSS) show a composition bias toward polar residues. S-geranylgeranyl cysteine attachment occurs at residues cysteine 199 and cysteine 200.

Belongs to the small GTPase superfamily. Rab family.

The protein resides in the cell membrane. It is found in the golgi apparatus. It localises to the trans-Golgi network membrane. The protein localises to the golgi apparatus membrane. Protein transport. Regulator of membrane traffic from the Golgi apparatus towards the endoplasmic reticulum (ER). This chain is Ras-related protein RABD2c (RABD2C), found in Arabidopsis thaliana (Mouse-ear cress).